Here is a 317-residue protein sequence, read N- to C-terminus: Sulfate adenylyltransferase subunit 2 (317 aa).

2 disordered regions span residues 1 to 21 (MPDSRPDTELSNPQSAKAPLD) and 298 to 317 (RAIDRDQSGSMEKKKREGYF).

This sequence belongs to the PAPS reductase family. CysD subfamily. In terms of assembly, heterodimer composed of CysD, the smaller subunit, and CysN.

The enzyme catalyses sulfate + ATP + H(+) = adenosine 5'-phosphosulfate + diphosphate. The protein operates within sulfur metabolism; hydrogen sulfide biosynthesis; sulfite from sulfate: step 1/3. With CysN forms the ATP sulfurylase (ATPS) that catalyzes the adenylation of sulfate producing adenosine 5'-phosphosulfate (APS) and diphosphate, the first enzymatic step in sulfur assimilation pathway. APS synthesis involves the formation of a high-energy phosphoric-sulfuric acid anhydride bond driven by GTP hydrolysis by CysN coupled to ATP hydrolysis by CysD. The chain is Sulfate adenylyltransferase subunit 2 from Rhizobium etli (strain ATCC 51251 / DSM 11541 / JCM 21823 / NBRC 15573 / CFN 42).